A 418-amino-acid chain; its full sequence is Histidine--tRNA ligase (418 aa).

This sequence belongs to the class-II aminoacyl-tRNA synthetase family.

It localises to the cytoplasm. The enzyme catalyses tRNA(His) + L-histidine + ATP = L-histidyl-tRNA(His) + AMP + diphosphate + H(+). The protein is Histidine--tRNA ligase of Methanococcus maripaludis (strain C7 / ATCC BAA-1331).